Consider the following 522-residue polypeptide: Man(5)GlcNAc(2)-PP-dolichol translocation protein RFT1 (522 aa).

Helical transmembrane passes span 35–55 (DVLG…LFLT), 75–95 (LLWL…YLWY), 108–128 (VLLS…FSVI), 143–165 (FAIG…LFMF), 177–197 (AQYI…YIYI), 322–342 (VVGV…PVVI), 354–374 (GGAL…INGI), 400–420 (IIHL…GFIV), 457–477 (TSIF…LFAT), and 479–499 (PGLS…ILTA).

This sequence belongs to the RFT1 family.

It localises to the endoplasmic reticulum membrane. It participates in protein modification; protein glycosylation. In terms of biological role, intramembrane glycolipid transporter that operates in the biosynthetic pathway of dolichol-linked oligosaccharides, the glycan precursors employed in protein asparagine (N)-glycosylation. The sequential addition of sugars to dolichol pyrophosphate produces dolichol-linked oligosaccharides containing fourteen sugars, including two GlcNAcs, nine mannoses and three glucoses. Once assembled, the oligosaccharide is transferred from the lipid to nascent proteins by oligosaccharyltransferases. The assembly of dolichol-linked oligosaccharides begins on the cytosolic side of the endoplasmic reticulum membrane and finishes in its lumen. RFT1 could mediate the translocation of the cytosolically oriented intermediate DolPP-GlcNAc2Man5, produced by ALG11, into the ER lumen where dolichol-linked oligosaccharides assembly continues. However, the intramembrane lipid transporter activity could not be confirmed in vitro. This chain is Man(5)GlcNAc(2)-PP-dolichol translocation protein RFT1, found in Caenorhabditis elegans.